We begin with the raw amino-acid sequence, 198 residues long: Recombination protein RecR (198 aa).

The segment at 57-72 adopts a C4-type zinc-finger fold; the sequence is CSTCQTLTDQDPCAIC. Residues 80–175 form the Toprim domain; it reads RMICVVEGVP…KVTRIAQGVP (96 aa).

It belongs to the RecR family.

Functionally, may play a role in DNA repair. It seems to be involved in an RecBC-independent recombinational process of DNA repair. It may act with RecF and RecO. In Anaeromyxobacter dehalogenans (strain 2CP-C), this protein is Recombination protein RecR.